A 379-amino-acid polypeptide reads, in one-letter code: Chaperone protein DnaJ (379 aa).

In terms of domain architecture, J spans 5 to 70; it reads DYYEVLGVGK…EKKAAYDQYG (66 aa). Residues 139 to 217 form a CR-type zinc finger; it reads GHEAQIRVPH…CHGQGKLKSQ (79 aa). Zn(2+) contacts are provided by cysteine 152, cysteine 155, cysteine 169, cysteine 172, cysteine 191, cysteine 194, cysteine 205, and cysteine 208. 4 CXXCXGXG motif repeats span residues 152-159, 169-176, 191-198, and 205-212; these read CEHCHGNG, CPTCNGVG, CPKCHGSG, and CTKCHGQG.

Belongs to the DnaJ family. In terms of assembly, homodimer. It depends on Zn(2+) as a cofactor.

It localises to the cytoplasm. In terms of biological role, participates actively in the response to hyperosmotic and heat shock by preventing the aggregation of stress-denatured proteins and by disaggregating proteins, also in an autonomous, DnaK-independent fashion. Unfolded proteins bind initially to DnaJ; upon interaction with the DnaJ-bound protein, DnaK hydrolyzes its bound ATP, resulting in the formation of a stable complex. GrpE releases ADP from DnaK; ATP binding to DnaK triggers the release of the substrate protein, thus completing the reaction cycle. Several rounds of ATP-dependent interactions between DnaJ, DnaK and GrpE are required for fully efficient folding. Also involved, together with DnaK and GrpE, in the DNA replication of plasmids through activation of initiation proteins. The chain is Chaperone protein DnaJ from Cupriavidus metallidurans (strain ATCC 43123 / DSM 2839 / NBRC 102507 / CH34) (Ralstonia metallidurans).